A 148-amino-acid chain; its full sequence is UPF0756 membrane protein YeaL (148 aa).

4 consecutive transmembrane segments (helical) span residues 14 to 34 (ALGFISHNTTVAVSILVLIIV), 51 to 71 (LSIGIIILTIGVMAPIASGTL), 86 to 106 (LVAIAVGVIVSWLGGRGVTLM), and 121 to 141 (VLGVALFRGVPVGPLIAAGLV).

The protein belongs to the UPF0756 family.

Its subcellular location is the cell membrane. In Shigella boydii serotype 18 (strain CDC 3083-94 / BS512), this protein is UPF0756 membrane protein YeaL.